The following is a 251-amino-acid chain: Triosephosphate isomerase (251 aa).

9–11 (NWK) contributes to the substrate binding site. The Electrophile role is filled by His95. The active-site Proton acceptor is the Glu167. Residues Gly173, Ser213, and 234 to 235 (GG) each bind substrate. Residue Ser213 is modified to Phosphoserine.

The protein belongs to the triosephosphate isomerase family. In terms of assembly, homodimer.

The protein resides in the cytoplasm. It carries out the reaction D-glyceraldehyde 3-phosphate = dihydroxyacetone phosphate. It participates in carbohydrate biosynthesis; gluconeogenesis. Its pathway is carbohydrate degradation; glycolysis; D-glyceraldehyde 3-phosphate from glycerone phosphate: step 1/1. Functionally, involved in the gluconeogenesis. Catalyzes stereospecifically the conversion of dihydroxyacetone phosphate (DHAP) to D-glyceraldehyde-3-phosphate (G3P). In Halalkalibacterium halodurans (strain ATCC BAA-125 / DSM 18197 / FERM 7344 / JCM 9153 / C-125) (Bacillus halodurans), this protein is Triosephosphate isomerase.